We begin with the raw amino-acid sequence, 730 residues long: MSPPNCLLAVLALTVFIGANNALPITSRPIEGNVQRMVWEDWVNLDPEQRNLTKEKKITAKSIFTLPFRHCPQGHTLFNQLCIPQSNIDPTDLVKQELILAGGSNGSPPPPPIGDYDYGDDEESEEIVYDLSVIPTAMQDGLPPSVGTGDQALPSEDAPLKFNIFEKKFPTGTGEHEEMPLPPDMAAATYAKNISTTPETSTSITPTSTTTFAVPSVPSGEASNRIPGGVDLLAAPSDAFSTSTTLSMPTSNTTTTSNKDIGQVESIVLPADQEHDGLVHLVTSSLSDNDSDDSSTTLNGFNAEADLAQLLKVDAFWPVYDGSIELLPPLFSHRKVAPPLSADQDVKTKHAVDAAEKVGAELEEEVGEEEVTATDILPSEEDEYTTETATTTGDTTVAEASMDTSTATSTSGQSSPHPPEEPEIDERENRLVLIKSKVQPVQLTTTTSATATTAADVANSSSSTDRFHYQHFVEDESSTTTATPEPSSSTPGDPIEQSDMPASDNDNLMTNTIGGRGDDDDDGGHKATSEIHVQQELRLINELVKGKQRQQHQPQKQQLEPTSTEITSALTSTSTEDATTTTTTTTAYTNWSKVMPQLGQSTSETAATTETVATSGQVNEISLTATSASTEVKHFSITNRSYRNSKIIREDRLTVEPEGIVESAASTESAGTAATTPNSSSNPDGYTPLWWLPSIGWRLDRHLDGNGEDQSLLLRFFSTFRGSNTAATTR.

The signal sequence occupies residues 1–21 (MSPPNCLLAVLALTVFIGANN). N-linked (GlcNAc...) asparagine glycosylation is found at N51 and N193. Positions 197-211 (TPETSTSITPTSTTT) are enriched in low complexity. The interval 197 to 222 (TPETSTSITPTSTTTFAVPSVPSGEA) is disordered. 2 N-linked (GlcNAc...) asparagine glycosylation sites follow: N252 and N289. Acidic residues predominate over residues 361–385 (ELEEEVGEEEVTATDILPSEEDEYT). The disordered stretch occupies residues 361–424 (ELEEEVGEEE…SPHPPEEPEI (64 aa)). Residues 386–415 (TETATTTGDTTVAEASMDTSTATSTSGQSS) are compositionally biased toward low complexity. An N-linked (GlcNAc...) asparagine glycan is attached at N459. Disordered stretches follow at residues 474–526 (EDES…GGHK) and 545–583 (KGKQRQQHQPQKQQLEPTSTEITSALTSTSTEDATTTTT). The span at 478–491 (STTTATPEPSSSTP) shows a compositional bias: low complexity. Residues 504-513 (DNDNLMTNTI) are compositionally biased toward polar residues. Residues 567-583 (TSALTSTSTEDATTTTT) show a composition bias toward low complexity. 2 N-linked (GlcNAc...) asparagine glycosylation sites follow: N590 and N639. Residues 663–676 (SAASTESAGTAATT) show a composition bias toward low complexity. Residues 663–683 (SAASTESAGTAATTPNSSSNP) form a disordered region. N678 carries an N-linked (GlcNAc...) asparagine glycan.

May be highly O-glycosylated in its Ser/Thr-rich C-terminal part. In terms of tissue distribution, expressed in the invagination primordia in a pattern that precisely precedes the pattern of constrictions.

The protein localises to the secreted. The protein resides in the extracellular space. It is found in the extracellular matrix. In terms of biological role, coordinates cell shape changes during formation of the ventral furrow and invagination of the posterior midgut primordium, by inducing apical constriction of cells in spatially and temporally defined manners. Could function as a secreted signal to initiate apical constriction by acting as a ligand for an unidentified G protein-coupled receptor, which in turn activates the G protein alpha subunit encoded by concertina, in neighboring cells. Such an intracellular pathway would ultimately induce contraction of the apical actin-myosin network. In the ventral furrow, fog appears to ensure that all the cells initiate constriction within several minutes of each other. In the posterior midgut invagination, fog appears to direct the ordered progression of constriction initiations out from a central region and also to delimit the peripheral extent of this spreading. This chain is Protein folded gastrulation (fog), found in Drosophila melanogaster (Fruit fly).